Consider the following 324-residue polypeptide: NADH-ubiquinone oxidoreductase chain 1 (324 aa).

A run of 8 helical transmembrane segments spans residues M10–V30, F76–L96, L107–G127, V143–L163, P178–A198, L229–F249, E260–I280, and F300–G320.

It belongs to the complex I subunit 1 family.

It is found in the mitochondrion inner membrane. It catalyses the reaction a ubiquinone + NADH + 5 H(+)(in) = a ubiquinol + NAD(+) + 4 H(+)(out). Core subunit of the mitochondrial membrane respiratory chain NADH dehydrogenase (Complex I) that is believed to belong to the minimal assembly required for catalysis. Complex I functions in the transfer of electrons from NADH to the respiratory chain. The immediate electron acceptor for the enzyme is believed to be ubiquinone. The protein is NADH-ubiquinone oxidoreductase chain 1 (MT-ND1) of Coturnix japonica (Japanese quail).